We begin with the raw amino-acid sequence, 353 residues long: Phosphoribosylformylglycinamidine cyclo-ligase (353 aa).

This sequence belongs to the AIR synthase family.

Its subcellular location is the cytoplasm. It carries out the reaction 2-formamido-N(1)-(5-O-phospho-beta-D-ribosyl)acetamidine + ATP = 5-amino-1-(5-phospho-beta-D-ribosyl)imidazole + ADP + phosphate + H(+). It functions in the pathway purine metabolism; IMP biosynthesis via de novo pathway; 5-amino-1-(5-phospho-D-ribosyl)imidazole from N(2)-formyl-N(1)-(5-phospho-D-ribosyl)glycinamide: step 2/2. In Pseudomonas aeruginosa (strain ATCC 15692 / DSM 22644 / CIP 104116 / JCM 14847 / LMG 12228 / 1C / PRS 101 / PAO1), this protein is Phosphoribosylformylglycinamidine cyclo-ligase.